A 530-amino-acid chain; its full sequence is Ubiquitin carboxyl-terminal hydrolase 17-like protein 21 (530 aa).

In terms of domain architecture, USP spans 80-375 (AGLQNMGNTC…QAYVLFYIQK (296 aa)). Catalysis depends on Cys-89, which acts as the Nucleophile. Catalysis depends on His-334, which acts as the Proton acceptor. Composition is skewed to basic and acidic residues over residues 382–392 (SESVSRGREPR) and 398–412 (DTDRRATQGELKRDH). Disordered stretches follow at residues 382–412 (SESVSRGREPRALGAEDTDRRATQGELKRDH) and 477–530 (NHHP…LVCQ). Residues 493-505 (TPTHQESMNTGTL) are compositionally biased toward polar residues. Positions 510 to 524 (GRARRSKGKNKHSKR) are enriched in basic residues.

It belongs to the peptidase C19 family. USP17 subfamily.

It is found in the nucleus. The protein localises to the endoplasmic reticulum. The enzyme catalyses Thiol-dependent hydrolysis of ester, thioester, amide, peptide and isopeptide bonds formed by the C-terminal Gly of ubiquitin (a 76-residue protein attached to proteins as an intracellular targeting signal).. Deubiquitinating enzyme that removes conjugated ubiquitin from specific proteins to regulate different cellular processes that may include cell proliferation, progression through the cell cycle, apoptosis, cell migration, and the cellular response to viral infection. This is Ubiquitin carboxyl-terminal hydrolase 17-like protein 21 (USP17L21) from Homo sapiens (Human).